We begin with the raw amino-acid sequence, 463 residues long: ATP-dependent protease ATPase subunit HslU (463 aa).

ATP-binding positions include isoleucine 19, 61-66, aspartate 277, glutamate 341, and arginine 413; that span reads GVGKTE.

This sequence belongs to the ClpX chaperone family. HslU subfamily. A double ring-shaped homohexamer of HslV is capped on each side by a ring-shaped HslU homohexamer. The assembly of the HslU/HslV complex is dependent on binding of ATP.

The protein resides in the cytoplasm. Functionally, ATPase subunit of a proteasome-like degradation complex; this subunit has chaperone activity. The binding of ATP and its subsequent hydrolysis by HslU are essential for unfolding of protein substrates subsequently hydrolyzed by HslV. HslU recognizes the N-terminal part of its protein substrates and unfolds these before they are guided to HslV for hydrolysis. The polypeptide is ATP-dependent protease ATPase subunit HslU (Bacillus cereus (strain ATCC 14579 / DSM 31 / CCUG 7414 / JCM 2152 / NBRC 15305 / NCIMB 9373 / NCTC 2599 / NRRL B-3711)).